The following is a 236-amino-acid chain: 5'-methylthioadenosine/S-adenosylhomocysteine nucleosidase (236 aa).

Glu12 (proton acceptor) is an active-site residue. Substrate-binding positions include Gly78, Met153, and 174-175 (ME). The active-site Proton donor is the Asp198.

Belongs to the PNP/UDP phosphorylase family. MtnN subfamily.

It carries out the reaction S-adenosyl-L-homocysteine + H2O = S-(5-deoxy-D-ribos-5-yl)-L-homocysteine + adenine. The catalysed reaction is S-methyl-5'-thioadenosine + H2O = 5-(methylsulfanyl)-D-ribose + adenine. The enzyme catalyses 5'-deoxyadenosine + H2O = 5-deoxy-D-ribose + adenine. It functions in the pathway amino-acid biosynthesis; L-methionine biosynthesis via salvage pathway; S-methyl-5-thio-alpha-D-ribose 1-phosphate from S-methyl-5'-thioadenosine (hydrolase route): step 1/2. In terms of biological role, catalyzes the irreversible cleavage of the glycosidic bond in both 5'-methylthioadenosine (MTA) and S-adenosylhomocysteine (SAH/AdoHcy) to adenine and the corresponding thioribose, 5'-methylthioribose and S-ribosylhomocysteine, respectively. Also cleaves 5'-deoxyadenosine, a toxic by-product of radical S-adenosylmethionine (SAM) enzymes, into 5-deoxyribose and adenine. In Geobacillus thermodenitrificans (strain NG80-2), this protein is 5'-methylthioadenosine/S-adenosylhomocysteine nucleosidase.